Consider the following 603-residue polypeptide: Threonine--tRNA ligase (603 aa).

The segment at 209–500 (DHRKLGNEMK…LIEHCAGELP (292 aa)) is catalytic. The Zn(2+) site is built by Cys-301, His-352, and His-477.

This sequence belongs to the class-II aminoacyl-tRNA synthetase family. As to quaternary structure, homodimer. It depends on Zn(2+) as a cofactor.

It localises to the cytoplasm. It catalyses the reaction tRNA(Thr) + L-threonine + ATP = L-threonyl-tRNA(Thr) + AMP + diphosphate + H(+). Functionally, catalyzes the attachment of threonine to tRNA(Thr) in a two-step reaction: L-threonine is first activated by ATP to form Thr-AMP and then transferred to the acceptor end of tRNA(Thr). Also edits incorrectly charged L-seryl-tRNA(Thr). This is Threonine--tRNA ligase from Campylobacter lari (strain RM2100 / D67 / ATCC BAA-1060).